The primary structure comprises 151 residues: Caveolin-3 (151 aa).

Over 1–83 (MMAEEHTDLE…RLLSTLLGVP (83 aa)) the chain is Cytoplasmic. Residue Lys38 forms a Glycyl lysine isopeptide (Lys-Gly) (interchain with G-Cter in SUMO3) linkage. The required for interaction with DAG1 stretch occupies residues 64–114 (TFTVSKYWCYRLLSTLLGVPLALLWGFLFACISFCHIWAVVPCIKSYLIEI). Positions 84-104 (LALLWGFLFACISFCHIWAVV) form an intramembrane region, helical. Residues 105 to 151 (PCIKSYLIEIQCISHIYSLCIRTFCNPLFAALGQVCSNIKVMLRKEV) lie on the Cytoplasmic side of the membrane.

It belongs to the caveolin family. Homooligomer. Interacts with DYSF. Interacts with DLG1 and KCNA5; forms a ternary complex. Interacts with DAG1 (via its C-terminal); the interaction prevents binding of DAG1 with DMD. Interacts with TRIM72. Interacts with MUSK; may regulate MUSK signaling. Interacts with POPDC1. Interacts with CAVIN1, CAVIN2 and CAVIN4. Post-translationally, sumoylation with SUMO3 by PIAS4 may reduce agonist-induced internalization and desensitization of adrenergic receptor ABRD2.

It localises to the golgi apparatus membrane. Its subcellular location is the cell membrane. The protein resides in the membrane. It is found in the caveola. The protein localises to the sarcolemma. Its function is as follows. May act as a scaffolding protein within caveolar membranes. Interacts directly with G-protein alpha subunits and can functionally regulate their activity. May also regulate voltage-gated potassium channels. Plays a role in the sarcolemma repair mechanism of both skeletal muscle and cardiomyocytes that permits rapid resealing of membranes disrupted by mechanical stress. Mediates the recruitment of CAVIN2 and CAVIN3 proteins to the caveolae. This Bos taurus (Bovine) protein is Caveolin-3 (CAV3).